A 59-amino-acid chain; its full sequence is Large ribosomal subunit protein uL30 (59 aa).

It belongs to the universal ribosomal protein uL30 family. Part of the 50S ribosomal subunit.

The sequence is that of Large ribosomal subunit protein uL30 from Clostridium botulinum (strain 657 / Type Ba4).